We begin with the raw amino-acid sequence, 447 residues long: MTAHEVNFDGLVGLTHHYAGLSFGNEASTRHRFQVSNPRLAVKQGLLKMKALADAGFPQAVIPPHERPFIPALRQLGFTGSDEQILDKVARQAPRWLSSVSSASPMWVANAATVCPSADALDGKVHLTVANLNNKFHRALEAPVTEALLRAIFRDESQFSVHSALPQVALLGDEGAANHNRLGGEYGSAGVQLFVYGREEENEIRPARYPARQSREASEAVARLNQVNPQQVIFAQQNPEVIDQGVFHNDVIAVSNRQVLFCHEAAFARQKVLINQLRTCVDGFMAIEVPAGEVSVSDAVATYLFNSQLLSRDDGSMLLVLPRECQDHVGVWRYLNKLVAEDNPISAMQVFDLRESMANGGGPACLRLRVVLTEEERRAVNPAVMMNDALFTALNSWADRYYRDRLTAADLADPLLLREGREALDMLTHLLDLGSVYPFQQTGAADG.

Residues 19–28 (AGLSFGNEAS), Asn110, and 137–138 (HR) each bind substrate. Glu174 is a catalytic residue. Arg212 is a substrate binding site. His248 is an active-site residue. 2 residues coordinate substrate: Asp250 and Asn359. Cys365 serves as the catalytic Nucleophile.

It belongs to the succinylarginine dihydrolase family. In terms of assembly, homodimer.

The catalysed reaction is N(2)-succinyl-L-arginine + 2 H2O + 2 H(+) = N(2)-succinyl-L-ornithine + 2 NH4(+) + CO2. Its pathway is amino-acid degradation; L-arginine degradation via AST pathway; L-glutamate and succinate from L-arginine: step 2/5. Functionally, catalyzes the hydrolysis of N(2)-succinylarginine into N(2)-succinylornithine, ammonia and CO(2). This Salmonella schwarzengrund (strain CVM19633) protein is N-succinylarginine dihydrolase.